We begin with the raw amino-acid sequence, 927 residues long: Alpha-catenin-like protein hmp-1 (927 aa).

Coiled-coil stretches lie at residues 319-354 (TREN…RRDD) and 672-696 (QENQ…QIDI). The segment at 901–927 (RNEIETGRDSDDEELDRRHQQRINGRL) is disordered.

The protein belongs to the vinculin/alpha-catenin family. In terms of assembly, component of a core catenin-cadherin complex consisting of hmr-1, hmp-1 and hmp-2; the complex localizes to adherens junctions. May interact with hmp-2. Epidermal cells.

The protein localises to the cell junction. It localises to the adherens junction. Its subcellular location is the cytoplasm. In terms of biological role, required for cell migration during body enclosure and cell shape changes during body elongation. Required for proper localization of other junctional components, such as pac-1. The chain is Alpha-catenin-like protein hmp-1 (hmp-1) from Caenorhabditis elegans.